Consider the following 245-residue polypeptide: Transmembrane protein 116 (245 aa).

A run of 4 helical transmembrane segments spans residues 24 to 44, 88 to 108, 141 to 161, and 173 to 195; these read MAFV…FCLG, GIAI…VLLI, FYPV…IIKL, and LYVL…YGWT.

It localises to the membrane. In Homo sapiens (Human), this protein is Transmembrane protein 116 (TMEM116).